We begin with the raw amino-acid sequence, 282 residues long: Pantothenate synthetase (282 aa).

33-40 (MGALHAGH) is an ATP binding site. Histidine 40 (proton donor) is an active-site residue. Residue glutamine 64 participates in (R)-pantoate binding. Glutamine 64 is a beta-alanine binding site. 150–153 (GEKD) is an ATP binding site. (R)-pantoate is bound at residue glutamine 156. Residues valine 179 and 187–190 (LSSR) contribute to the ATP site.

It belongs to the pantothenate synthetase family. In terms of assembly, homodimer.

It is found in the cytoplasm. It carries out the reaction (R)-pantoate + beta-alanine + ATP = (R)-pantothenate + AMP + diphosphate + H(+). It participates in cofactor biosynthesis; (R)-pantothenate biosynthesis; (R)-pantothenate from (R)-pantoate and beta-alanine: step 1/1. Catalyzes the condensation of pantoate with beta-alanine in an ATP-dependent reaction via a pantoyl-adenylate intermediate. The chain is Pantothenate synthetase from Rhodospirillum rubrum (strain ATCC 11170 / ATH 1.1.1 / DSM 467 / LMG 4362 / NCIMB 8255 / S1).